The primary structure comprises 607 residues: Glutamine--fructose-6-phosphate aminotransferase [isomerizing] (607 aa).

The active-site Nucleophile; for GATase activity is the C2. The Glutamine amidotransferase type-2 domain maps to C2–N217. 2 consecutive SIS domains span residues I283 to A422 and V455 to P597. K602 acts as the For Fru-6P isomerization activity in catalysis.

As to quaternary structure, homodimer.

The protein localises to the cytoplasm. The enzyme catalyses D-fructose 6-phosphate + L-glutamine = D-glucosamine 6-phosphate + L-glutamate. Its function is as follows. Catalyzes the first step in hexosamine metabolism, converting fructose-6P into glucosamine-6P using glutamine as a nitrogen source. The sequence is that of Glutamine--fructose-6-phosphate aminotransferase [isomerizing] from Brucella suis biovar 1 (strain 1330).